The chain runs to 292 residues: Elongation factor Ts (292 aa).

Residues 82–85 (TDFV) are involved in Mg(2+) ion dislocation from EF-Tu.

The protein belongs to the EF-Ts family.

The protein resides in the cytoplasm. Its function is as follows. Associates with the EF-Tu.GDP complex and induces the exchange of GDP to GTP. It remains bound to the aminoacyl-tRNA.EF-Tu.GTP complex up to the GTP hydrolysis stage on the ribosome. The polypeptide is Elongation factor Ts (Legionella pneumophila (strain Lens)).